A 185-amino-acid polypeptide reads, in one-letter code: Potassium-transporting ATPase KdpC subunit (185 aa).

A helical transmembrane segment spans residues 8 to 28 (LGLVLIMFVLCGFIFPLTVTA). Positions 113–132 (GQKLSSDAVTTSGSGLDPDI) are disordered. The span at 114 to 126 (QKLSSDAVTTSGS) shows a compositional bias: polar residues.

The protein belongs to the KdpC family. As to quaternary structure, the system is composed of three essential subunits: KdpA, KdpB and KdpC.

The protein resides in the cell membrane. Functionally, part of the high-affinity ATP-driven potassium transport (or Kdp) system, which catalyzes the hydrolysis of ATP coupled with the electrogenic transport of potassium into the cytoplasm. This subunit acts as a catalytic chaperone that increases the ATP-binding affinity of the ATP-hydrolyzing subunit KdpB by the formation of a transient KdpB/KdpC/ATP ternary complex. This Staphylococcus haemolyticus (strain JCSC1435) protein is Potassium-transporting ATPase KdpC subunit.